We begin with the raw amino-acid sequence, 579 residues long: MKFVLVSGGVVSGVGKGIIASSCGLLLKTLGLKVTAIKIDPYINVDAGTMNPKEHGECFVLHDGGETDLDLGNYERYLGVDLARDNNITTGKVYQQVIENERKGKYLGRTVQVVPHVIDAIIDTINRVSRVPVDKSGEEPDVCIIELGGTVGDIESMPFVEALTQLRHRAGKNNFINIHVSYVPVVNGEQKTKPTQHAVKSVRSAGLIPDLIACRCEKPLEQGTINKVASSCQVEVNQVLAVRDMPTIYQVPLLLEEQGLLRELKETLKLDDVKLSPARVSQGQEVWAKWQKIVPLGYAETVDIVLVGKYVELHDAYLSVIKALEHSAMRCGRKLNLIWVDSEHLEEKTQKEDPTKYHKAWHDVCVAKGILVPGGFGHRGTEGMIRAAQWAREQKTPFLGVCLGMQVAVIEAARNLCELKDATSEEFDANAEHRVIIFMPEGSKEKLGGTMRLGTRSTHFQPGSEFSKLRALYGEATTIEERHRHRYEVNPDYIEKLEQSGLIFIGKDDSGERMEVVEIKDHPYYVGVQYHPEYTSRVLDPSRPFLGFVAAAIGCLDQITKEILQDAGFANGSINGAHF.

One can recognise a Glutamine amidotransferase type-1 domain in the interval 310–558; that stretch reads YVELHDAYLS…VAAAIGCLDQ (249 aa). Catalysis depends on for GATase activity residues cysteine 402, histidine 531, and glutamate 533.

The protein belongs to the CTP synthase family.

It catalyses the reaction UTP + L-glutamine + ATP + H2O = CTP + L-glutamate + ADP + phosphate + 2 H(+). Its pathway is pyrimidine metabolism; CTP biosynthesis via de novo pathway; CTP from UDP: step 2/2. Functionally, catalyzes the ATP-dependent amination of UTP to CTP with either L-glutamine or ammonia as the source of nitrogen. This chain is CTP synthase (pyr-7), found in Neurospora crassa (strain ATCC 24698 / 74-OR23-1A / CBS 708.71 / DSM 1257 / FGSC 987).